A 360-amino-acid chain; its full sequence is Probable CCR4-associated factor 1 homolog 1 (360 aa).

Residues Asp-37, Glu-39, Asp-155, and Asp-226 each coordinate a divalent metal cation.

This sequence belongs to the CAF1 family. In terms of assembly, component of the CCR4-NOT complex, at least composed of CRR4 and CAF1 proteins. The cofactor is a divalent metal cation.

Its subcellular location is the nucleus. The protein resides in the cytoplasm. The enzyme catalyses Exonucleolytic cleavage of poly(A) to 5'-AMP.. Functionally, ubiquitous transcription factor required for a diverse set of processes. It is a component of the CCR4 complex involved in the control of gene expression. The polypeptide is Probable CCR4-associated factor 1 homolog 1 (CAF1-1) (Arabidopsis thaliana (Mouse-ear cress)).